A 94-amino-acid polypeptide reads, in one-letter code: DNA-directed RNA polymerase subunit omega (94 aa).

The protein belongs to the RNA polymerase subunit omega family. As to quaternary structure, consists of a sigma factor and the RNAP core enzyme which is composed of 2 alpha chains, 1 beta chain, 1 beta' chain and 1 subunit omega.

It catalyses the reaction RNA(n) + a ribonucleoside 5'-triphosphate = RNA(n+1) + diphosphate. Its function is as follows. Promotes RNA polymerase assembly. Latches the N- and C-terminal regions of the beta' subunit thereby facilitating its interaction with the beta and alpha subunits. This is DNA-directed RNA polymerase subunit omega from Shewanella violacea (strain JCM 10179 / CIP 106290 / LMG 19151 / DSS12).